The sequence spans 208 residues: Protein-L-isoaspartate O-methyltransferase (208 aa).

The active site involves S59.

It belongs to the methyltransferase superfamily. L-isoaspartyl/D-aspartyl protein methyltransferase family.

The protein localises to the cytoplasm. The enzyme catalyses [protein]-L-isoaspartate + S-adenosyl-L-methionine = [protein]-L-isoaspartate alpha-methyl ester + S-adenosyl-L-homocysteine. Its function is as follows. Catalyzes the methyl esterification of L-isoaspartyl residues in peptides and proteins that result from spontaneous decomposition of normal L-aspartyl and L-asparaginyl residues. It plays a role in the repair and/or degradation of damaged proteins. The polypeptide is Protein-L-isoaspartate O-methyltransferase (Sodalis glossinidius (strain morsitans)).